We begin with the raw amino-acid sequence, 273 residues long: MSDMHSLLIAAILGVVEGLTEFLPVSSTGHMIIVGHLLGFEGDTAKTFEVVIQLGSILAVVVMFWRRLFGLIGIHFGRPLQREGESKGQLTLIHILLGMIPAMVLGLVFHDTIKSLFNPINVMYALVVGGLLLIAAECLKPKEPRAPGLDDMTYRQAFMIGCFQCLALWPGFSRSGATISGGMLMGVSRYAASEFSFLLAVPMMMGATVLDLYKSWSFLSAADIPMFAVGFVTAFVVALIAIKTFLQLIKRISFIPFAIYRFVVAAAVYVVFF.

Transmembrane regions (helical) follow at residues 6–26, 45–65, 90–110, 116–136, 190–210, 222–242, and 252–272; these read SLLIAAILGVVEGLTEFLPVS, AKTFEVVIQLGSILAVVVMFW, LTLIHILLGMIPAMVLGLVFH, LFNPINVMYALVVGGLLLIAA, YAASEFSFLLAVPMMMGATVL, ADIPMFAVGFVTAFVVALIAI, and ISFIPFAIYRFVVAAAVYVVF.

It belongs to the UppP family.

Its subcellular location is the cell inner membrane. It carries out the reaction di-trans,octa-cis-undecaprenyl diphosphate + H2O = di-trans,octa-cis-undecaprenyl phosphate + phosphate + H(+). In terms of biological role, catalyzes the dephosphorylation of undecaprenyl diphosphate (UPP). Confers resistance to bacitracin. This Salmonella arizonae (strain ATCC BAA-731 / CDC346-86 / RSK2980) protein is Undecaprenyl-diphosphatase.